A 505-amino-acid chain; its full sequence is Trans-cinnamate 4-monooxygenase C4H2 (505 aa).

2 consecutive short sequence motifs (nuclear localization signal) follow at residues 161-168 (VKKMKESN) and 247-254 (EKRLKLFK). A heme-binding site is contributed by cysteine 447.

Belongs to the cytochrome P450 family. Heme is required as a cofactor.

It localises to the nucleus. The enzyme catalyses (E)-cinnamate + reduced [NADPH--hemoprotein reductase] + O2 = (E)-4-coumarate + oxidized [NADPH--hemoprotein reductase] + H2O + H(+). It functions in the pathway phenylpropanoid metabolism; trans-4-coumarate biosynthesis; trans-4-coumarate from trans-cinnamate: step 1/1. In terms of biological role, component of the floral volatile benzenoid/phenylpropanoid (FVBP) biosynthetic pathway that controls carbon flux to pigments essential for pollination or UV protection, to numerous pytoalexins synthesized by plants when challenged by pathogens, and to lignins. The protein is Trans-cinnamate 4-monooxygenase C4H2 of Petunia hybrida (Petunia).